Consider the following 233-residue polypeptide: Biosynthetic peptidoglycan transglycosylase (233 aa).

Residues 7–27 (VFTWLAKLVLGLFFASILSVV) traverse the membrane as a helical segment.

It belongs to the glycosyltransferase 51 family.

Its subcellular location is the cell inner membrane. The catalysed reaction is [GlcNAc-(1-&gt;4)-Mur2Ac(oyl-L-Ala-gamma-D-Glu-L-Lys-D-Ala-D-Ala)](n)-di-trans,octa-cis-undecaprenyl diphosphate + beta-D-GlcNAc-(1-&gt;4)-Mur2Ac(oyl-L-Ala-gamma-D-Glu-L-Lys-D-Ala-D-Ala)-di-trans,octa-cis-undecaprenyl diphosphate = [GlcNAc-(1-&gt;4)-Mur2Ac(oyl-L-Ala-gamma-D-Glu-L-Lys-D-Ala-D-Ala)](n+1)-di-trans,octa-cis-undecaprenyl diphosphate + di-trans,octa-cis-undecaprenyl diphosphate + H(+). The protein operates within cell wall biogenesis; peptidoglycan biosynthesis. Its function is as follows. Peptidoglycan polymerase that catalyzes glycan chain elongation from lipid-linked precursors. The polypeptide is Biosynthetic peptidoglycan transglycosylase (Shewanella oneidensis (strain ATCC 700550 / JCM 31522 / CIP 106686 / LMG 19005 / NCIMB 14063 / MR-1)).